The sequence spans 20 residues: Disintegrin (20 aa).

Residues 1 to 20 (EAGEECDCGTPENPCCDAAT) form the Disintegrin domain. 2 cysteine pairs are disulfide-bonded: Cys6/Cys15 and Cys8/Cys16.

Belongs to the venom metalloproteinase (M12B) family. P-II subfamily. P-IIa sub-subfamily. Monomer. As to expression, expressed by the venom gland.

Its subcellular location is the secreted. In terms of biological role, inhibits fibrinogen interaction with platelets. Acts by binding to alpha-IIb/beta-3 (ITGA2B/ITGB3) on the platelet surface and inhibits aggregation induced by ADP, thrombin, platelet-activating factor and collagen. This chain is Disintegrin, found in Bothrops fonsecai (Fonseca's lancehead).